The chain runs to 601 residues: Probable sphingosine-1-phosphate lyase (601 aa).

An N6-(pyridoxal phosphate)lysine modification is found at K360.

This sequence belongs to the group II decarboxylase family. Sphingosine-1-phosphate lyase subfamily. The cofactor is pyridoxal 5'-phosphate.

It catalyses the reaction sphinganine 1-phosphate = hexadecanal + phosphoethanolamine. Functionally, cleaves phosphorylated sphingoid bases (PSBs), such as sphingosine-1-phosphate, into fatty aldehydes and phosphoethanolamine. Possibly implicated in influencing the macrophage autophagy pathway. This chain is Probable sphingosine-1-phosphate lyase, found in Legionella pneumophila subsp. pneumophila (strain Philadelphia 1 / ATCC 33152 / DSM 7513).